The primary structure comprises 89 residues: Small ribosomal subunit protein bS20 (89 aa).

It belongs to the bacterial ribosomal protein bS20 family.

In terms of biological role, binds directly to 16S ribosomal RNA. In Wolbachia pipientis subsp. Culex pipiens (strain wPip), this protein is Small ribosomal subunit protein bS20.